We begin with the raw amino-acid sequence, 536 residues long: Lysosomal acid glucosylceramidase (536 aa).

A signal peptide spans 1–39 (MEFSSPSREECPKPLSRVSIMAGSLTGLLLLQAVSWASG). Intrachain disulfides connect C43-C55 and C57-C62. 3 N-linked (GlcNAc...) asparagine glycosylation sites follow: N58, N98, and N185. E274 functions as the Proton donor in the catalytic mechanism. The N-linked (GlcNAc...) asparagine glycan is linked to N309. Residue E379 is the Nucleophile of the active site. N-linked (GlcNAc...) asparagine glycosylation occurs at N501.

Belongs to the glycosyl hydrolase 30 family. In terms of assembly, interacts with saposin-C. Interacts with SCARB2. Interacts with TCP1. May interacts with SNCA; this interaction may inhibit the glucosylceramidase activity. Interacts with GRN; this interaction prevents aggregation of GBA1-SCARB2 complex via interaction with HSPA1A upon stress.

It localises to the lysosome membrane. It catalyses the reaction a beta-D-glucosyl-(1&lt;-&gt;1')-N-acylsphing-4-enine + H2O = an N-acylsphing-4-enine + D-glucose. The catalysed reaction is a beta-D-galactosyl-(1&lt;-&gt;1')-N-acylsphing-4-enine + H2O = an N-acylsphing-4-enine + D-galactose. The enzyme catalyses cholesteryl 3-beta-D-glucoside + H2O = cholesterol + D-glucose. It carries out the reaction a beta-D-glucosyl-(1&lt;-&gt;1')-N-acylsphing-4-enine + cholesterol = cholesteryl 3-beta-D-glucoside + an N-acylsphing-4-enine. It catalyses the reaction beta-D-glucosyl-N-(9Z-octadecenoyl)-sphing-4E-enine + cholesterol = N-(9Z-octadecenoyl)-sphing-4-enine + cholesteryl 3-beta-D-glucoside. The catalysed reaction is beta-D-glucosyl-(1&lt;-&gt;1')-N-hexadecanoylsphing-4-enine + cholesterol = cholesteryl 3-beta-D-glucoside + N-hexadecanoylsphing-4-enine. The enzyme catalyses beta-D-glucosyl-N-octanoylsphing-4E-enine + cholesterol = N-octanoylsphing-4-enine + cholesteryl 3-beta-D-glucoside. It carries out the reaction beta-D-glucosyl-N-dodecanoylsphing-4-enine + cholesterol = N-dodecanoylsphing-4-enine + cholesteryl 3-beta-D-glucoside. It catalyses the reaction beta-D-glucosyl-(1&lt;-&gt;1)-N-octadecanoylsphing-4-enine + cholesterol = N-octadecanoylsphing-4-enine + cholesteryl 3-beta-D-glucoside. The catalysed reaction is beta-D-glucosyl-(1&lt;-&gt;1')-N-(15Z-tetracosenoyl)-sphing-4-enine + cholesterol = N-(15Z-tetracosenoyl)-sphing-4-enine + cholesteryl 3-beta-D-glucoside. The enzyme catalyses a beta-D-galactosyl-(1&lt;-&gt;1')-N-acylsphing-4-enine + cholesterol = cholesteryl 3-beta-D-galactoside + an N-acylsphing-4-enine. It carries out the reaction 1-(beta-D-galactosyl)-N-dodecanoylsphing-4-enine + cholesterol = cholesteryl 3-beta-D-galactoside + N-dodecanoylsphing-4-enine. It catalyses the reaction a beta-D-xylosyl-(1&lt;-&gt;1')-N-acylsphing-4-enine + cholesterol = cholesteryl 3-beta-D-xyloside + an N-acylsphing-4-enine. The catalysed reaction is beta-D-xylosyl-(1&lt;-&gt;1')-N-(9Z-octadecenoyl)-sphing-4-enine + cholesterol = cholesteryl 3-beta-D-xyloside + N-(9Z-octadecenoyl)-sphing-4-enine. The protein operates within steroid metabolism; cholesterol metabolism. It functions in the pathway sphingolipid metabolism. With respect to regulation, synergistically activated by saposin-A and saposin-C, two saposin peptides produced by proteolytic processing of prosaposin/PSAP. Saposin-C activates GBA1 through its recruitment to membranes. The membrane structure and composition in anionic phospholipids are also important for the activation. Activated by PKC in the salvage pathway of ceramide formation. Inhibited by conduritol B epoxide/CBE. Its function is as follows. Glucosylceramidase that catalyzes, within the lysosomal compartment, the hydrolysis of glucosylceramides/GlcCers (such as beta-D-glucosyl-(1&lt;-&gt;1')-N-acylsphing-4-enine) into free ceramides (such as N-acylsphing-4-enine) and glucose. Plays a central role in the degradation of complex lipids and the turnover of cellular membranes. Through the production of ceramides, participates in the PKC-activated salvage pathway of ceramide formation. Catalyzes the glucosylation of cholesterol, through a transglucosylation reaction where glucose is transferred from GlcCer to cholesterol. GlcCer containing mono-unsaturated fatty acids (such as beta-D-glucosyl-N-(9Z-octadecenoyl)-sphing-4-enine) are preferred as glucose donors for cholesterol glucosylation when compared with GlcCer containing same chain length of saturated fatty acids (such as beta-D-glucosyl-N-octadecanoyl-sphing-4-enine). Under specific conditions, may alternatively catalyze the reverse reaction, transferring glucose from cholesteryl 3-beta-D-glucoside to ceramide. Can also hydrolyze cholesteryl 3-beta-D-glucoside producing glucose and cholesterol. Catalyzes the hydrolysis of galactosylceramides/GalCers (such as beta-D-galactosyl-(1&lt;-&gt;1')-N-acylsphing-4-enine), as well as the transfer of galactose between GalCers and cholesterol in vitro, but with lower activity than with GlcCers. Contrary to GlcCer and GalCer, xylosylceramide/XylCer (such as beta-D-xyosyl-(1&lt;-&gt;1')-N-acylsphing-4-enine) is not a good substrate for hydrolysis, however it is a good xylose donor for transxylosylation activity to form cholesteryl 3-beta-D-xyloside. This Homo sapiens (Human) protein is Lysosomal acid glucosylceramidase.